The primary structure comprises 455 residues: tRNA modification GTPase MnmE (455 aa).

Residues Arg-24, Glu-81, and Lys-120 each contribute to the (6S)-5-formyl-5,6,7,8-tetrahydrofolate site. Residues 216-378 enclose the TrmE-type G domain; the sequence is GMTVVIAGRP…LREHLKHCMG (163 aa). Residue Asn-226 participates in K(+) binding. GTP is bound by residues 226 to 231, 245 to 251, 270 to 273, and 335 to 338; these read NAGKSS, TDIAGTT, DTAG, and NKAD. Position 230 (Ser-230) interacts with Mg(2+). The K(+) site is built by Thr-245, Ile-247, and Thr-250. Position 251 (Thr-251) interacts with Mg(2+). Lys-455 is a binding site for (6S)-5-formyl-5,6,7,8-tetrahydrofolate.

Belongs to the TRAFAC class TrmE-Era-EngA-EngB-Septin-like GTPase superfamily. TrmE GTPase family. In terms of assembly, homodimer. Heterotetramer of two MnmE and two MnmG subunits. The cofactor is K(+).

The protein localises to the cytoplasm. Exhibits a very high intrinsic GTPase hydrolysis rate. Involved in the addition of a carboxymethylaminomethyl (cmnm) group at the wobble position (U34) of certain tRNAs, forming tRNA-cmnm(5)s(2)U34. The polypeptide is tRNA modification GTPase MnmE (Stutzerimonas stutzeri (strain A1501) (Pseudomonas stutzeri)).